The sequence spans 360 residues: Photosystem II protein D1 (360 aa).

Transmembrane regions (helical) follow at residues 29–46 (YIGWFGVLMIPTLLAATA), 118–133 (HFLLGCACYLGRQWEL), and 142–156 (WICVAYSAPLASATA). His118 lines the chlorophyll a pocket. Tyr126 serves as a coordination point for pheophytin a. [CaMn4O5] cluster contacts are provided by Asp170 and Glu189. Residues 197–218 (FHMLGVAGVFGGSLFSAMHGSL) traverse the membrane as a helical segment. His198 contributes to the chlorophyll a binding site. A quinone-binding positions include His215 and 264 to 265 (SF). His215 contacts Fe cation. A Fe cation-binding site is contributed by His272. A helical transmembrane segment spans residues 274–288 (FLAAWPVVGIWFTAL). 4 residues coordinate [CaMn4O5] cluster: His332, Glu333, Asp342, and Ala344. Positions 345-360 (AGEVAPVALTAPAING) are excised as a propeptide.

Belongs to the reaction center PufL/M/PsbA/D family. As to quaternary structure, PSII is composed of 1 copy each of membrane proteins PsbA, PsbB, PsbC, PsbD, PsbE, PsbF, PsbH, PsbI, PsbJ, PsbK, PsbL, PsbM, PsbT, PsbX, PsbY, PsbZ, Psb30/Ycf12, peripheral proteins PsbO, CyanoQ (PsbQ), PsbU, PsbV and a large number of cofactors. It forms dimeric complexes. It depends on The D1/D2 heterodimer binds P680, chlorophylls that are the primary electron donor of PSII, and subsequent electron acceptors. It shares a non-heme iron and each subunit binds pheophytin, quinone, additional chlorophylls, carotenoids and lipids. D1 provides most of the ligands for the Mn4-Ca-O5 cluster of the oxygen-evolving complex (OEC). There is also a Cl(-1) ion associated with D1 and D2, which is required for oxygen evolution. The PSII complex binds additional chlorophylls, carotenoids and specific lipids. as a cofactor. Post-translationally, tyr-161 forms a radical intermediate that is referred to as redox-active TyrZ, YZ or Y-Z. C-terminally processed by CtpA; processing is essential to allow assembly of the oxygen-evolving complex and thus photosynthetic growth.

It is found in the cellular thylakoid membrane. The enzyme catalyses 2 a plastoquinone + 4 hnu + 2 H2O = 2 a plastoquinol + O2. Functionally, photosystem II (PSII) is a light-driven water:plastoquinone oxidoreductase that uses light energy to abstract electrons from H(2)O, generating O(2) and a proton gradient subsequently used for ATP formation. It consists of a core antenna complex that captures photons, and an electron transfer chain that converts photonic excitation into a charge separation. The D1/D2 (PsbA/PsbD) reaction center heterodimer binds P680, the primary electron donor of PSII as well as several subsequent electron acceptors. This is Photosystem II protein D1 from Microchaete diplosiphon (Fremyella diplosiphon).